Here is a 278-residue protein sequence, read N- to C-terminus: Large ribosomal subunit protein uL2 (278 aa).

Residues 223-278 (GSVMNPNDHPHGGGEGKAPIGHPSPMSPWGKKTLGKKTRDHKAKSEKFIVRHRRAK) are disordered. Positions 255-264 (TLGKKTRDHK) are enriched in basic residues.

It belongs to the universal ribosomal protein uL2 family. Part of the 50S ribosomal subunit. Forms a bridge to the 30S subunit in the 70S ribosome.

Its function is as follows. One of the primary rRNA binding proteins. Required for association of the 30S and 50S subunits to form the 70S ribosome, for tRNA binding and peptide bond formation. It has been suggested to have peptidyltransferase activity; this is somewhat controversial. Makes several contacts with the 16S rRNA in the 70S ribosome. In Lacticaseibacillus paracasei (strain ATCC 334 / BCRC 17002 / CCUG 31169 / CIP 107868 / KCTC 3260 / NRRL B-441) (Lactobacillus paracasei), this protein is Large ribosomal subunit protein uL2.